An 887-amino-acid polypeptide reads, in one-letter code: Alanine--tRNA ligase (887 aa).

His581, His585, Cys683, and His687 together coordinate Zn(2+).

The protein belongs to the class-II aminoacyl-tRNA synthetase family. Zn(2+) is required as a cofactor.

The protein localises to the cytoplasm. The catalysed reaction is tRNA(Ala) + L-alanine + ATP = L-alanyl-tRNA(Ala) + AMP + diphosphate. Catalyzes the attachment of alanine to tRNA(Ala) in a two-step reaction: alanine is first activated by ATP to form Ala-AMP and then transferred to the acceptor end of tRNA(Ala). Also edits incorrectly charged Ser-tRNA(Ala) and Gly-tRNA(Ala) via its editing domain. This is Alanine--tRNA ligase from Ehrlichia canis (strain Jake).